The following is a 362-amino-acid chain: MSGNGFGHLFRFTTFGESHGPAIGCVVDGVPARIPLTEADIQHYLDQRKPGQNRFTTQRREPDEVKILSGVFEGLTTGTSIGLLIENTDQRSKDYGEIKDTYRPGHADWVYQQKYGIRDYRGGGRSSARETAMRVAAGAIARKVLDALAPGLSIRGAMVQMGPHAIDRSRWDWAELGNNPFWCPDGAAAKSWEEYLDTIRKSGSSIGGVVEVVASGVPVGLGAPVYDKLDADLAKAMMSINAVKGVEIGDGFAAAALSGEENADEMRMGNDGQVGFLSNHAGGILGGISTGQDVVVRLAVKPTSSILTPKQSVDAKGNNVEVSTKGRHDPCVAIRAVPVAEAMMACTLADHLLRSLAQPRLS.

Positions 48 and 54 each coordinate NADP(+). Residues 125 to 127 (RSS), 241 to 242 (NA), Gly-286, 301 to 305 (KPTSS), and Arg-327 each bind FMN.

It belongs to the chorismate synthase family. In terms of assembly, homotetramer. FMNH2 serves as cofactor.

The catalysed reaction is 5-O-(1-carboxyvinyl)-3-phosphoshikimate = chorismate + phosphate. Its pathway is metabolic intermediate biosynthesis; chorismate biosynthesis; chorismate from D-erythrose 4-phosphate and phosphoenolpyruvate: step 7/7. In terms of biological role, catalyzes the anti-1,4-elimination of the C-3 phosphate and the C-6 proR hydrogen from 5-enolpyruvylshikimate-3-phosphate (EPSP) to yield chorismate, which is the branch point compound that serves as the starting substrate for the three terminal pathways of aromatic amino acid biosynthesis. This reaction introduces a second double bond into the aromatic ring system. The sequence is that of Chorismate synthase from Paramagnetospirillum magneticum (strain ATCC 700264 / AMB-1) (Magnetospirillum magneticum).